The primary structure comprises 496 residues: Hemophilin secretion modulator (496 aa).

An N-terminal signal peptide occupies residues Met1–Ala19. Transmembrane regions (beta stranded) follow at residues Trp198–Tyr208, Asp253–Ala263, His268–Phe277, Thr291–Phe301, Asn305–His315, Trp327–Ile337, Lys341–Asp351, Ser365–Ile374, Thr380–Asp389, Gln403–Trp413, Asn418–Trp427, Gln446–Pro455, Met462–His472, and His486–Arg495.

This sequence belongs to the Slam family.

It is found in the cell outer membrane. In terms of biological role, part of a high affinity heme acquisition system. Mediates the secretion of the hemophilin HphA across the outer membrane into the extracellular environment. Plays a supporting role for full virulence. This chain is Hemophilin secretion modulator, found in Acinetobacter baumannii.